Reading from the N-terminus, the 253-residue chain is Imidazole glycerol phosphate synthase subunit HisF (253 aa).

Residues Asp-11 and Asp-130 contribute to the active site.

The protein belongs to the HisA/HisF family. As to quaternary structure, heterodimer of HisH and HisF.

The protein localises to the cytoplasm. The enzyme catalyses 5-[(5-phospho-1-deoxy-D-ribulos-1-ylimino)methylamino]-1-(5-phospho-beta-D-ribosyl)imidazole-4-carboxamide + L-glutamine = D-erythro-1-(imidazol-4-yl)glycerol 3-phosphate + 5-amino-1-(5-phospho-beta-D-ribosyl)imidazole-4-carboxamide + L-glutamate + H(+). It participates in amino-acid biosynthesis; L-histidine biosynthesis; L-histidine from 5-phospho-alpha-D-ribose 1-diphosphate: step 5/9. Functionally, IGPS catalyzes the conversion of PRFAR and glutamine to IGP, AICAR and glutamate. The HisF subunit catalyzes the cyclization activity that produces IGP and AICAR from PRFAR using the ammonia provided by the HisH subunit. In Acetivibrio thermocellus (strain ATCC 27405 / DSM 1237 / JCM 9322 / NBRC 103400 / NCIMB 10682 / NRRL B-4536 / VPI 7372) (Clostridium thermocellum), this protein is Imidazole glycerol phosphate synthase subunit HisF.